We begin with the raw amino-acid sequence, 203 residues long: E3 ubiquitin-protein ligase RNF152 (203 aa).

The RING-type zinc finger occupies 12-55 (CQICFNYYSPRRRPKLLDCKHTCCSVCLQQMRTSQKDVRCPWCR). The segment at 106 to 165 (ISKERALLPGDMGCRLLPGSQQKSVTVVTVPAEQRPLQGGAPQEAVEEEPDRRGVAKSST) is necessary for interaction with RRAGA. A helical membrane pass occupies residues 167-187 (SGVCTVILVACVLVFLLGIVL).

This sequence belongs to the RNF152 family. In terms of assembly, interacts with RRAGA (inactive GDP-bound form); stimulated by amino acid starvation. In terms of processing, ubiquitinated. Autoubiquitinated in vitro, leading to its degradation by the proteasome.

The protein localises to the lysosome membrane. It carries out the reaction S-ubiquitinyl-[E2 ubiquitin-conjugating enzyme]-L-cysteine + [acceptor protein]-L-lysine = [E2 ubiquitin-conjugating enzyme]-L-cysteine + N(6)-ubiquitinyl-[acceptor protein]-L-lysine.. The protein operates within protein modification; protein ubiquitination. Functionally, E3 ubiquitin-protein ligase that acts as a negative regulator of mTORC1 signaling by mediating ubiquitination of RagA/RRAGA and RHEB. Catalyzes 'Lys-63'-linked polyubiquitination of RagA/RRAGA in response to amino acid starvation, thereby regulating mTORC1 signaling. Also mediates monoubiquitination of RHEB, promoting its association with the TSC-TBC complex and subsequent inhibition. Also mediates 'Lys-48'-linked polyubiquitination of target proteins and their subsequent targeting to the proteasome for degradation. Induces apoptosis when overexpressed. This is E3 ubiquitin-protein ligase RNF152 from Ailuropoda melanoleuca (Giant panda).